The following is a 381-amino-acid chain: Putative glutamate--cysteine ligase 2 (381 aa).

It belongs to the glutamate--cysteine ligase type 2 family. YbdK subfamily.

The catalysed reaction is L-cysteine + L-glutamate + ATP = gamma-L-glutamyl-L-cysteine + ADP + phosphate + H(+). Its function is as follows. ATP-dependent carboxylate-amine ligase which exhibits weak glutamate--cysteine ligase activity. The protein is Putative glutamate--cysteine ligase 2 of Polaromonas naphthalenivorans (strain CJ2).